A 110-amino-acid chain; its full sequence is MEVLAKHRFARTSAQKARLVADQIRGLPVSKALEILTFSPKKAAVLVKKVLDSAIANAEHNEGADIDELKVGAVFVDEGPTMKRIMPRAKGRADRIMKRTSHITVVVADR.

Belongs to the universal ribosomal protein uL22 family. As to quaternary structure, part of the 50S ribosomal subunit.

In terms of biological role, this protein binds specifically to 23S rRNA; its binding is stimulated by other ribosomal proteins, e.g. L4, L17, and L20. It is important during the early stages of 50S assembly. It makes multiple contacts with different domains of the 23S rRNA in the assembled 50S subunit and ribosome. Its function is as follows. The globular domain of the protein is located near the polypeptide exit tunnel on the outside of the subunit, while an extended beta-hairpin is found that lines the wall of the exit tunnel in the center of the 70S ribosome. This chain is Large ribosomal subunit protein uL22, found in Shewanella frigidimarina (strain NCIMB 400).